A 427-amino-acid chain; its full sequence is Trigger factor (427 aa).

In terms of domain architecture, PPIase FKBP-type spans 163-248; the sequence is GDTAVIDFEG…VHEIKAKELP (86 aa).

It belongs to the FKBP-type PPIase family. Tig subfamily.

The protein localises to the cytoplasm. The enzyme catalyses [protein]-peptidylproline (omega=180) = [protein]-peptidylproline (omega=0). Involved in protein export. Acts as a chaperone by maintaining the newly synthesized protein in an open conformation. Functions as a peptidyl-prolyl cis-trans isomerase. The protein is Trigger factor of Bacillus cytotoxicus (strain DSM 22905 / CIP 110041 / 391-98 / NVH 391-98).